Here is a 407-residue protein sequence, read N- to C-terminus: D-galactonate dehydratase family member Pjdr2_1176 (407 aa).

Asp-208 contributes to the Mg(2+) binding site. D-arabinonate is bound at residue His-210. Mg(2+) is bound by residues Glu-234 and Glu-260. D-arabinonate contacts are provided by Glu-260, Arg-281, and Glu-337.

It belongs to the mandelate racemase/muconate lactonizing enzyme family. GalD subfamily.

Its function is as follows. Has no detectable activity with D-mannonate and with a panel of 70 other acid sugars (in vitro), in spite of the conservation of the residues that are expected to be important for catalytic activity and cofactor binding. May have evolved a divergent function. The protein is D-galactonate dehydratase family member Pjdr2_1176 of Paenibacillus sp. (strain JDR-2).